A 900-amino-acid polypeptide reads, in one-letter code: DNA polymerase nu (900 aa).

The span at 60-75 (LEDRKTQSPEKKDLKS) shows a compositional bias: basic and acidic residues. 2 disordered regions span residues 60–90 (LEDRKTQSPEKKDLKSLRSQTSRGSAKLSPQ) and 863–900 (GPPPGPCRTESPSNSLAAPGSPASTQPPPLHFSPSFCL). The segment covering 76-90 (LRSQTSRGSAKLSPQ) has biased composition (polar residues).

This sequence belongs to the DNA polymerase type-A family. As to quaternary structure, interacts with FANCD2, FANCI, PCNA, RAD51 and HELQ. In terms of tissue distribution, highly expressed in testis and heart. Weakly expressed in skeletal muscle.

It is found in the nucleus. It carries out the reaction DNA(n) + a 2'-deoxyribonucleoside 5'-triphosphate = DNA(n+1) + diphosphate. With respect to regulation, inhibited by ddTTP. DNA polymerase with very low fidelity that catalyzes considerable misincorporation by inserting dTTP opposite a G template, and dGTP opposite a T template. Is the least accurate of the DNA polymerase A family (i.e. POLG, POLN and POLQ). Can perform accurate translesion DNA synthesis (TLS) past a 5S-thymine glycol. Can perform efficient strand displacement past a nick or a gap and gives rise to an amount of product similar to that on non-damaged template. Has no exonuclease activity. Error-prone DNA polymerase that preferentially misincorporates dT regardless of template sequence. May play a role in TLS during interstrand cross-link (ICL) repair. May be involved in TLS when genomic replication is blocked by extremely large major groove DNA lesions. May function in the bypass of some DNA-protein and DNA-DNA cross-links. May have a role in cellular tolerance to DNA cross-linking agents. Involved in the repair of DNA cross-links and double-strand break (DSB) resistance. Participates in FANCD2-mediated repair. Forms a complex with HELQ helicase that participates in homologous recombination (HR) repair and is essential for cellular protection against DNA cross-links. This Homo sapiens (Human) protein is DNA polymerase nu (POLN).